The following is a 292-amino-acid chain: 33 kDa chaperonin (292 aa).

2 disulfides stabilise this stretch: Cys230–Cys232 and Cys263–Cys266.

The protein belongs to the HSP33 family. Under oxidizing conditions two disulfide bonds are formed involving the reactive cysteines. Under reducing conditions zinc is bound to the reactive cysteines and the protein is inactive.

It localises to the cytoplasm. Redox regulated molecular chaperone. Protects both thermally unfolding and oxidatively damaged proteins from irreversible aggregation. Plays an important role in the bacterial defense system toward oxidative stress. This is 33 kDa chaperonin from Enterobacter sp. (strain 638).